The sequence spans 777 residues: Ethylene receptor 4 (777 aa).

Transmembrane regions (helical) follow at residues 49–69 (LLIA…ATCA), 77–97 (AVLH…LAAF), and 113–133 (AAKV…LTFI). Residues Cys88 and His92 each contribute to the Cu cation site. The GAF domain occupies 184-344 (DAHAILRTTA…VVADQAAVAL (161 aa)). The region spanning 387–521 (AMCHAMRRPV…NTESGACRLS (135 aa)) is the Histidine kinase domain. His390 carries the phosphohistidine; by autocatalysis modification. One can recognise a Response regulatory domain in the interval 645-774 (RVLLADDDAM…ALGAQLCRVL (130 aa)). Asp696 carries the 4-aspartylphosphate modification.

Belongs to the ethylene receptor family. Cu cation serves as cofactor.

It localises to the endoplasmic reticulum membrane. It carries out the reaction ATP + protein L-histidine = ADP + protein N-phospho-L-histidine.. Functionally, ethylene receptor related to bacterial two-component regulators. Acts as a redundant negative regulator of ethylene signaling. This chain is Ethylene receptor 4, found in Oryza sativa subsp. indica (Rice).